The sequence spans 361 residues: MVWLVAMTPRQSSLCGLAAHGLWFLGLVLLMDATARPANHSSTRERAANREENEIMPPDHLNGVKLEMDGHLNKDFHQEVFLGKDMDGFDEDSEPRRSRRKLMVIFSKVDVNTDRRISAKEMQHWIMEKTAEHFQEAVKENKLHFRAVDPDGDGHVSWDEYKVKFLASKGHNEREIAEAIKNHEELKVDEETQEVLGNLRDRWYQADNPPADLLLTEDEFLSFLHPEHSRGMLKFMVKEIFRDLDQDGDKQLSLPEFISLPVGTVENQQGQDIDDNWVKDRKKEFEELIDSNHDGIVTMEELENYMDPMNEYNALNEAKQMIAIADENQNHHLEPEEILKYSEFFTGSKLMDYARNVHEEF.

Residues 1-35 (MVWLVAMTPRQSSLCGLAAHGLWFLGLVLLMDATA) form the signal peptide. The N-linked (GlcNAc...) asparagine glycan is linked to N39. 2 consecutive EF-hand domains span residues 97 to 132 (RSRR…KTAE) and 136 to 171 (EAVK…SKGH). S98 bears the Phosphoserine mark. Residues D110, N112, D114, R116, E121, D149, D151, D153, H155, and E160 each coordinate Ca(2+). Position 192 is a phosphothreonine (T192). 4 consecutive EF-hand domains span residues 196–231 (LGNL…HSRG), 232–267 (MLKF…TVEN), 277–312 (WVKD…MNEY), and 313–348 (NALN…FTGS). Residue D212 participates in Ca(2+) binding. At T216 the chain carries Phosphothreonine. Ca(2+) contacts are provided by E219, D245, D247, D249, Q251, and E256. T264 carries the post-translational modification Phosphothreonine. Residues D290, N292, and D294 each coordinate Ca(2+). Phosphothreonine is present on T298. Ca(2+)-binding residues include E301, D326, N328, N330, H332, and E337. The segment at 308 to 361 (PMNEYNALNEAKQMIAIADENQNHHLEPEEILKYSEFFTGSKLMDYARNVHEEF) is necessary for intracellular retention in Golgi apparatus lumen.

It belongs to the CREC family. As to expression, ubiquitous.

It is found in the golgi apparatus lumen. May regulate calcium-dependent activities in the endoplasmic reticulum lumen or post-ER compartment. In Mus musculus (Mouse), this protein is 45 kDa calcium-binding protein (Sdf4).